The chain runs to 258 residues: NAD kinase (258 aa).

D51 (proton acceptor) is an active-site residue. NAD(+) contacts are provided by residues 51–52 (DG), 119–120 (ND), K130, D149, 160–165 (TAYSLS), and A184.

Belongs to the NAD kinase family. Homodimer. A divalent metal cation is required as a cofactor.

It localises to the cytoplasm. The enzyme catalyses NAD(+) + ATP = ADP + NADP(+) + H(+). Functionally, involved in the regulation of the intracellular balance between NAD(H) and NADP(H), and is a key enzyme in the biosynthesis of NADP. Catalyzes specifically the phosphorylation on 2'-hydroxyl of the adenosine moiety of NAD to yield NADP. In Thermotoga maritima (strain ATCC 43589 / DSM 3109 / JCM 10099 / NBRC 100826 / MSB8), this protein is NAD kinase (NADK).